The primary structure comprises 470 residues: UDP-N-acetylmuramate--L-alanine ligase (470 aa).

118-124 (GTHGKTT) is an ATP binding site.

This sequence belongs to the MurCDEF family.

The protein resides in the cytoplasm. It carries out the reaction UDP-N-acetyl-alpha-D-muramate + L-alanine + ATP = UDP-N-acetyl-alpha-D-muramoyl-L-alanine + ADP + phosphate + H(+). Its pathway is cell wall biogenesis; peptidoglycan biosynthesis. Its function is as follows. Cell wall formation. This chain is UDP-N-acetylmuramate--L-alanine ligase, found in Cereibacter sphaeroides (strain ATCC 17029 / ATH 2.4.9) (Rhodobacter sphaeroides).